A 123-amino-acid chain; its full sequence is DNA-directed RNA polymerase I subunit RPA12 (123 aa).

Zn(2+) is bound by residues C17, C20, C35, C38, C84, and C87. The segment at 17 to 38 (CPDCGSVLPLPGIQDTVICSRC) adopts a C4-type zinc-finger fold. The TFIIS-type zinc-finger motif lies at 80 to 120 (IDRRCPRCGHEGMAYHTRQMRSADEGQTVFYTCINCKFQEK). The Hairpin signature appears at 103–104 (DE). 2 residues coordinate Zn(2+): C112 and C115.

The protein belongs to the archaeal RpoM/eukaryotic RPA12/RPB9/RPC11 RNA polymerase family. Component of the RNA polymerase I (Pol I) complex consisting of 13 subunits: a ten-subunit catalytic core composed of POLR1A/RPA1, POLR1B/RPA2, POLR1C/RPAC1, POLR1D/RPAC2, POLR1H/RPA12, POLR2E/RPABC1, POLR2F/RPABC2, POLR2H/RPABC3, POLR2K/RPABC4 and POLR2L/RPABC5; a mobile stalk subunit POLR1F/RPA43 protruding from the core and additional subunits homologous to general transcription factors POLR1E/RPA49 and POLR1G/RPA34. Part of Pol I pre-initiation complex (PIC), in which Pol I core assembles with RRN3 and promoter-bound UTBF and SL1/TIF-IB complex.

It is found in the nucleus. The protein localises to the nucleolus. Its function is as follows. Core component of RNA polymerase I (Pol I), a DNA-dependent RNA polymerase which synthesizes ribosomal RNA precursors using the four ribonucleoside triphosphates as substrates. Can mediate Pol I proofreading of the nascent RNA transcript. Anchors into the Pol I active site to monitor transcription fidelity and cleave mis-incorporated 5'-ribonucleotides. This Mus musculus (Mouse) protein is DNA-directed RNA polymerase I subunit RPA12.